Here is a 279-residue protein sequence, read N- to C-terminus: MPEKPVLIAGPTASGKSALALRIAAEQGGVIVNADASQGYDCWRVLTARPAPDEERQTPHALYGHLNAKVRYSAGHWLRDVMPYLAGEARPIIVGGTGLYFTALTRGLADIPPTPAEIRAKGDRLERAEMLAALDARTRDRIDNANRARVQRAWEVQMATGRGLAAWQDETGAPALPLSAAQAIVFDVDKEVLNARIEKRFDLMLAAGALEEARRVLPDYDPTLPAHRAIGAPELIAHLKGQISLEAAREAAITATRQYAKRQRTWFRSKMRHWSAYMP.

10 to 17 (GPTASGKS) is a binding site for ATP. Residue 12-17 (TASGKS) coordinates substrate.

This sequence belongs to the IPP transferase family. As to quaternary structure, monomer. It depends on Mg(2+) as a cofactor.

The catalysed reaction is adenosine(37) in tRNA + dimethylallyl diphosphate = N(6)-dimethylallyladenosine(37) in tRNA + diphosphate. Its function is as follows. Catalyzes the transfer of a dimethylallyl group onto the adenine at position 37 in tRNAs that read codons beginning with uridine, leading to the formation of N6-(dimethylallyl)adenosine (i(6)A). The protein is tRNA dimethylallyltransferase of Roseobacter denitrificans (strain ATCC 33942 / OCh 114) (Erythrobacter sp. (strain OCh 114)).